The chain runs to 239 residues: tRNA (guanine-N(1)-)-methyltransferase (239 aa).

S-adenosyl-L-methionine is bound by residues Gly110 and 130–135 (VGDYVL).

This sequence belongs to the RNA methyltransferase TrmD family. In terms of assembly, homodimer.

It is found in the cytoplasm. It catalyses the reaction guanosine(37) in tRNA + S-adenosyl-L-methionine = N(1)-methylguanosine(37) in tRNA + S-adenosyl-L-homocysteine + H(+). Specifically methylates guanosine-37 in various tRNAs. This chain is tRNA (guanine-N(1)-)-methyltransferase, found in Borrelia hermsii (strain HS1 / DAH).